Consider the following 341-residue polypeptide: uncharacterized protein (341 aa).

Residues S111, D247, and H275 contribute to the active site.

It belongs to the DmpD/TodF/XylF esterase family.

This is an uncharacterized protein from Mycobacterium bovis (strain ATCC BAA-935 / AF2122/97).